The following is a 151-amino-acid chain: MKSFFVVFAIVFQATLVALSLAADADDGQCINTTAVVEYFNPFIQECCPNEEPPSRDCVTCGLKGAGLVVTEDGKEMFDFDKYRRKLRGRIIRNERLIYRSLRECCRRRLCEAEPTFTCFHDKVKEQCPGDRTTSLLRSPLKDLPLRSPSC.

An N-terminal signal peptide occupies residues 1–22 (MKSFFVVFAIVFQATLVALSLA).

This sequence belongs to the scoloptoxin-17 family. Contains 5 disulfide bonds. Expressed by the venom gland.

The protein localises to the secreted. This Ethmostigmus rubripes (Giant centipede) protein is U-scoloptoxin(17)-Er2a.